We begin with the raw amino-acid sequence, 182 residues long: 7-carboxy-7-deazaguanine synthase (182 aa).

Residues 12-14 and Arg27 contribute to the substrate site; that span reads LQG. The 165-residue stretch at 18 to 182 folds into the Radical SAM core domain; sequence HTGTPAVFIR…LQTHKLIDIR (165 aa). [4Fe-4S] cluster contacts are provided by Cys31, Cys35, and Cys38. Residue Thr40 coordinates Mg(2+). Position 68 (Thr68) interacts with substrate. S-adenosyl-L-methionine-binding positions include Gly70 and 111–113; that span reads SPK.

Belongs to the radical SAM superfamily. 7-carboxy-7-deazaguanine synthase family. In terms of assembly, homodimer. It depends on [4Fe-4S] cluster as a cofactor. S-adenosyl-L-methionine is required as a cofactor. Requires Mg(2+) as cofactor.

The enzyme catalyses 6-carboxy-5,6,7,8-tetrahydropterin + H(+) = 7-carboxy-7-deazaguanine + NH4(+). Its pathway is purine metabolism; 7-cyano-7-deazaguanine biosynthesis. Its function is as follows. Catalyzes the complex heterocyclic radical-mediated conversion of 6-carboxy-5,6,7,8-tetrahydropterin (CPH4) to 7-carboxy-7-deazaguanine (CDG), a step common to the biosynthetic pathways of all 7-deazapurine-containing compounds. This is 7-carboxy-7-deazaguanine synthase from Bacteroides thetaiotaomicron (strain ATCC 29148 / DSM 2079 / JCM 5827 / CCUG 10774 / NCTC 10582 / VPI-5482 / E50).